An 80-amino-acid chain; its full sequence is MTVDEVKGQVYDIIVTKMGVGKEQIKDDSKFTDDLGADSLDTVELIMEFENKFGIQIPDEDAEKISNVQDAINYIVEKKK.

One can recognise a Carrier domain in the interval 4–79 (DEVKGQVYDI…DAINYIVEKK (76 aa)). S39 carries the post-translational modification O-(pantetheine 4'-phosphoryl)serine.

This sequence belongs to the acyl carrier protein (ACP) family. 4'-phosphopantetheine is transferred from CoA to a specific serine of apo-ACP by AcpS. This modification is essential for activity because fatty acids are bound in thioester linkage to the sulfhydryl of the prosthetic group.

It localises to the cytoplasm. The protein operates within lipid metabolism; fatty acid biosynthesis. In terms of biological role, carrier of the growing fatty acid chain in fatty acid biosynthesis. The polypeptide is Acyl carrier protein (Chloroherpeton thalassium (strain ATCC 35110 / GB-78)).